The sequence spans 260 residues: Resolvase (260 aa).

The region spanning 38-241 is the Tyr recombinase domain; it reads ELPKYLLAPE…FALDVAARHR (204 aa). Catalysis depends on residues R73, K105, H193, R196, and H219. The active-site O-(3'-phospho-DNA)-tyrosine intermediate is Y228.

The protein belongs to the 'phage' integrase family.

In terms of biological role, this resolvase acts at the RfsF equivalent resolution sequence of pColBM-CL139. The polypeptide is Resolvase (resD) (Escherichia coli).